A 162-amino-acid chain; its full sequence is MRNSRFCAILAVISAISVSYVLAQRSQQSVIADLGKLIVDNCPPMLCTGLDCAVVTERNGCQLCACPIGSPSRGCDPMPFILWHDLIVNGCPNVTLNSRDPAQKVHRWFRRVNRFTNTDQCEPYIFPYCPELDFNLWRSPRTKQECELYCYSIDEQRKRGII.

Residues 1 to 23 form the signal peptide; the sequence is MRNSRFCAILAVISAISVSYVLA.

The protein resides in the secreted. Functionally, secreted protein that is involved in larval elongation, early adult growth and male tail development. The polypeptide is Protein lon-8 (Caenorhabditis elegans).